Reading from the N-terminus, the 156-residue chain is Small ribosomal subunit protein uS7 (156 aa).

The protein belongs to the universal ribosomal protein uS7 family. As to quaternary structure, part of the 30S ribosomal subunit. Contacts proteins S9 and S11.

One of the primary rRNA binding proteins, it binds directly to 16S rRNA where it nucleates assembly of the head domain of the 30S subunit. Is located at the subunit interface close to the decoding center, probably blocks exit of the E-site tRNA. The protein is Small ribosomal subunit protein uS7 of Azoarcus sp. (strain BH72).